The chain runs to 320 residues: Protein EI24 homolog (320 aa).

The next 3 membrane-spanning stretches (helical) occupy residues 41 to 61, 94 to 114, and 175 to 195; these read QCFL…KWFI, GLLQ…SFIL, and ILLL…PYIG. Residue Asn217 is glycosylated (N-linked (GlcNAc...) asparagine). 3 helical membrane-spanning segments follow: residues 227–247, 248–268, and 292–312; these read LDFF…CVLA, IFFL…PLFV, and LGKL…LSIF.

This sequence belongs to the EI24 (TC 9.B.7) family.

It localises to the membrane. This chain is Protein EI24 homolog, found in Arabidopsis thaliana (Mouse-ear cress).